The sequence spans 113 residues: Hemerythrin (113 aa).

7 residues coordinate Fe cation: histidine 25, histidine 54, glutamate 58, histidine 73, histidine 77, histidine 101, and aspartate 106.

Belongs to the hemerythrin family. In terms of assembly, homooctamer.

In terms of biological role, hemerythrin is a respiratory protein in blood cells of certain marine worms. The oxygen-binding site in each chain contains two iron atoms. In Themiste dyscrita (Peanut worm), this protein is Hemerythrin.